The chain runs to 271 residues: MLSIHDPLLIFTDLDGTLLNSHTFEWQPAAPWLTRLHESGVPVILCSSKTAAEMLQLQTTLNLQGLPLIAENGAVIQLDVHWEDHPNYPRLIAGISHNEIRLVLHKLREKEQFKFTTFDDVDDQVISEWTGLNRAQSALTRLHEASVSLIWRDSDERMAQFVARLNDLGLQFVHGARFWHVLDASAGKDQAANWLIEAYRRQWRARPLTLGLGDGPNDAPLLDVMDYAVVVKGLNREGVHLRNDDPQRVYRSQNEGPDGWREGMDYFFSRS.

Residue D13 is the Nucleophile of the active site. Mg(2+) is bound by residues D13, D15, and D214.

Belongs to the HAD-like hydrolase superfamily. MPGP family. It depends on Mg(2+) as a cofactor.

It is found in the cytoplasm. It catalyses the reaction 2-O-(alpha-D-mannosyl)-3-phosphoglycerate + H2O = (2R)-2-O-(alpha-D-mannosyl)-glycerate + phosphate. In Salmonella choleraesuis (strain SC-B67), this protein is Mannosyl-3-phosphoglycerate phosphatase (yedP).